The sequence spans 66 residues: Xenoxin-3 (66 aa).

4 cysteine pairs are disulfide-bonded: C3–C24, C17–C37, C43–C58, and C59–C64.

As to expression, expressed by the skin dorsal glands.

It localises to the secreted. In terms of biological role, lacks alpha-neurotoxic activity, has apparently no antibacterial activity, nor anti-coagulant potency. The protein is Xenoxin-3 of Xenopus laevis (African clawed frog).